A 1047-amino-acid chain; its full sequence is Suppression of tumorigenicity 18 protein (1047 aa).

Disordered stretches follow at residues 41–92 (TAED…HSTA), 168–221 (FLIH…VPKY), and 251–286 (DSET…SESL). Over residues 52–65 (NKRKSLLMKPRHYS) the composition is skewed to basic residues. Positions 171–181 (HSDDGRDKIDD) are enriched in basic and acidic residues. CCHHC-type zinc fingers lie at residues 359-402 (PRPE…PLEI) and 403-446 (LAMH…KLAM). Cysteine 368, cysteine 373, histidine 386, cysteine 392, cysteine 412, cysteine 417, histidine 430, and cysteine 436 together coordinate Zn(2+). 2 disordered regions span residues 523 to 563 (GRKT…SYSY) and 672 to 710 (YSKT…SPKP). A compositionally biased stretch (polar residues) spans 550-563 (AHTQSPGRASSYSY). Residues 677 to 687 (GKTEEEKEKDP) are compositionally biased toward basic and acidic residues. 4 consecutive CCHHC-type zinc fingers follow at residues 715-758 (RDLK…LKSL), 759-802 (MAAN…GVKM), 807-850 (EEKE…QKEN), and 860-903 (KLNK…IKKG). Zn(2+) is bound by residues cysteine 724, cysteine 729, histidine 742, cysteine 748, cysteine 768, cysteine 773, histidine 786, cysteine 792, cysteine 816, cysteine 821, histidine 834, cysteine 840, cysteine 869, cysteine 874, histidine 887, and cysteine 893. Positions 920 to 992 (IESDEEIRHL…AGLSQALISS (73 aa)) form a coiled coil.

This sequence belongs to the MYT1 family. As to expression, detected at low levels in heart, liver, kidney, skeletal muscle, pancreas, testis, ovary and prostate. Detected at even lower levels in mammary epithelial cells and breast cancer cells.

It localises to the nucleus. Its function is as follows. Repressor that binds to DNA sequences containing a bipartite element consisting of a direct repeat of the sequence 5'-AAAGTTT-3' separated by 2-9 nucleotides. Represses basal transcription activity from target promoters. Inhibits colony formation in cultured breast cancer cells. This chain is Suppression of tumorigenicity 18 protein (ST18), found in Homo sapiens (Human).